The chain runs to 826 residues: Periplasmic nitrate reductase (826 aa).

A signal peptide (tat-type signal) is located at residues 1–32 (MSISRREFLKANAAVAAATAVGATLPVKIVEA). The 4Fe-4S Mo/W bis-MGD-type domain maps to 39-95 (IKWDKAPCRFCGVGCSVLVGTDNGKVVATKGDPESPVNKGLNCIKGYFLSKIMYGKD). Residues Cys-46, Cys-49, Cys-53, and Cys-81 each coordinate [4Fe-4S] cluster. Residues Lys-83, Gln-150, Asn-175, Cys-179, 212–219 (WGANMAEM), 262–264 (QSD), Met-372, Gln-376, Asn-482, 508–509 (SD), Lys-531, Asp-558, and 716–725 (TGRVLEHWHT) each bind Mo-bis(molybdopterin guanine dinucleotide). Position 792 (Phe-792) interacts with substrate. Positions 800 and 817 each coordinate Mo-bis(molybdopterin guanine dinucleotide).

This sequence belongs to the prokaryotic molybdopterin-containing oxidoreductase family. NasA/NapA/NarB subfamily. In terms of assembly, component of the periplasmic nitrate reductase NapAB complex composed of NapA and NapB. The cofactor is [4Fe-4S] cluster. Mo-bis(molybdopterin guanine dinucleotide) serves as cofactor. Predicted to be exported by the Tat system. The position of the signal peptide cleavage has not been experimentally proven.

It is found in the periplasm. It catalyses the reaction 2 Fe(II)-[cytochrome] + nitrate + 2 H(+) = 2 Fe(III)-[cytochrome] + nitrite + H2O. In terms of biological role, catalytic subunit of the periplasmic nitrate reductase complex NapAB. Receives electrons from NapB and catalyzes the reduction of nitrate to nitrite. The polypeptide is Periplasmic nitrate reductase (Shewanella halifaxensis (strain HAW-EB4)).